Consider the following 170-residue polypeptide: UPF0690 protein C1orf52 homolog (170 aa).

Disordered stretches follow at residues methionine 1–leucine 56 and serine 124–valine 170. The segment covering aspartate 46 to leucine 56 has biased composition (basic and acidic residues). The segment covering glutamate 144–glutamine 159 has biased composition (acidic residues).

It belongs to the UPF0690 family.

In Xenopus tropicalis (Western clawed frog), this protein is UPF0690 protein C1orf52 homolog.